A 140-amino-acid chain; its full sequence is Large ribosomal subunit protein bL17 (140 aa).

The segment at 121-140 (AAKGLDSGPTAEANDDDSEE) is disordered.

Belongs to the bacterial ribosomal protein bL17 family. As to quaternary structure, part of the 50S ribosomal subunit. Contacts protein L32.

This is Large ribosomal subunit protein bL17 from Rhodospirillum rubrum (strain ATCC 11170 / ATH 1.1.1 / DSM 467 / LMG 4362 / NCIMB 8255 / S1).